The following is a 134-amino-acid chain: Bet1-like protein At1g29060 (134 aa).

Gly residues predominate over residues 1–12 (MASNRGAGGSLY). The disordered stretch occupies residues 1–31 (MASNRGAGGSLYGGADPYRSREGLSTRNASG). Over 1–110 (MASNRGAGGS…LSIIRSGNNH (110 aa)) the chain is Cytoplasmic. The 63-residue stretch at 40–102 (DPMHSDLDDE…KNNIRKLNLS (63 aa)) folds into the t-SNARE coiled-coil homology domain. A helical; Anchor for type IV membrane protein transmembrane segment spans residues 111-131 (IMHVVLFALLLFFILYMWSKM). Residues 132 to 134 (FKR) lie on the Vesicular side of the membrane.

It belongs to the BET1 family.

It localises to the golgi apparatus membrane. The protein localises to the endoplasmic reticulum membrane. In terms of biological role, required for vesicular transport from the ER to the Golgi complex. Functions as a SNARE associated with ER-derived vesicles. This chain is Bet1-like protein At1g29060, found in Arabidopsis thaliana (Mouse-ear cress).